The following is a 555-amino-acid chain: Chaperonin GroEL (555 aa).

Residues 29 to 32 (TLGP), Lys50, 86 to 90 (DGTTT), Gly418, and Asp499 each bind ATP. The tract at residues 528 to 555 (HEEDNNTGNRSGGGVGGGHHGGMGGMDF) is disordered. A compositionally biased stretch (gly residues) spans 537-555 (RSGGGVGGGHHGGMGGMDF).

This sequence belongs to the chaperonin (HSP60) family. As to quaternary structure, forms a cylinder of 14 subunits composed of two heptameric rings stacked back-to-back. Interacts with the co-chaperonin GroES.

The protein resides in the cytoplasm. The enzyme catalyses ATP + H2O + a folded polypeptide = ADP + phosphate + an unfolded polypeptide.. In terms of biological role, together with its co-chaperonin GroES, plays an essential role in assisting protein folding. The GroEL-GroES system forms a nano-cage that allows encapsulation of the non-native substrate proteins and provides a physical environment optimized to promote and accelerate protein folding. In Orientia tsutsugamushi (Rickettsia tsutsugamushi), this protein is Chaperonin GroEL.